Here is an 880-residue protein sequence, read N- to C-terminus: Alanine--tRNA ligase (880 aa).

Residues His-567, His-571, Cys-669, and His-673 each coordinate Zn(2+).

This sequence belongs to the class-II aminoacyl-tRNA synthetase family. The cofactor is Zn(2+).

The protein resides in the cytoplasm. It catalyses the reaction tRNA(Ala) + L-alanine + ATP = L-alanyl-tRNA(Ala) + AMP + diphosphate. Catalyzes the attachment of alanine to tRNA(Ala) in a two-step reaction: alanine is first activated by ATP to form Ala-AMP and then transferred to the acceptor end of tRNA(Ala). Also edits incorrectly charged Ser-tRNA(Ala) and Gly-tRNA(Ala) via its editing domain. This chain is Alanine--tRNA ligase, found in Bacillus cereus (strain ATCC 14579 / DSM 31 / CCUG 7414 / JCM 2152 / NBRC 15305 / NCIMB 9373 / NCTC 2599 / NRRL B-3711).